Reading from the N-terminus, the 291-residue chain is uncharacterized protein (291 aa).

Functionally, essential for virus function. This is an uncharacterized protein from Sulfolobus spindle-shape virus 1 (SSV1).